The primary structure comprises 467 residues: Asparagine--tRNA ligase (467 aa).

The protein belongs to the class-II aminoacyl-tRNA synthetase family. As to quaternary structure, homodimer.

It localises to the cytoplasm. It catalyses the reaction tRNA(Asn) + L-asparagine + ATP = L-asparaginyl-tRNA(Asn) + AMP + diphosphate + H(+). The sequence is that of Asparagine--tRNA ligase from Baumannia cicadellinicola subsp. Homalodisca coagulata.